Here is a 474-residue protein sequence, read N- to C-terminus: UDP-N-acetylmuramate--L-alanine ligase (474 aa).

ATP is bound at residue 119–125; the sequence is GTHGKTT.

The protein belongs to the MurCDEF family.

It localises to the cytoplasm. The catalysed reaction is UDP-N-acetyl-alpha-D-muramate + L-alanine + ATP = UDP-N-acetyl-alpha-D-muramoyl-L-alanine + ADP + phosphate + H(+). It participates in cell wall biogenesis; peptidoglycan biosynthesis. In terms of biological role, cell wall formation. In Jannaschia sp. (strain CCS1), this protein is UDP-N-acetylmuramate--L-alanine ligase.